A 274-amino-acid chain; its full sequence is Thymidylate synthase (274 aa).

A dUMP-binding site is contributed by R21. H51 contacts (6R)-5,10-methylene-5,6,7,8-tetrahydrofolate. 123–124 (RR) serves as a coordination point for dUMP. C156 serves as the catalytic Nucleophile. Residues 176-179 (RSAD), N187, and 217-219 (HIY) contribute to the dUMP site. D179 provides a ligand contact to (6R)-5,10-methylene-5,6,7,8-tetrahydrofolate. S273 contributes to the (6R)-5,10-methylene-5,6,7,8-tetrahydrofolate binding site.

The protein belongs to the thymidylate synthase family. Bacterial-type ThyA subfamily. In terms of assembly, homodimer.

It localises to the cytoplasm. It catalyses the reaction dUMP + (6R)-5,10-methylene-5,6,7,8-tetrahydrofolate = 7,8-dihydrofolate + dTMP. The protein operates within pyrimidine metabolism; dTTP biosynthesis. Its function is as follows. Catalyzes the reductive methylation of 2'-deoxyuridine-5'-monophosphate (dUMP) to 2'-deoxythymidine-5'-monophosphate (dTMP) while utilizing 5,10-methylenetetrahydrofolate (mTHF) as the methyl donor and reductant in the reaction, yielding dihydrofolate (DHF) as a by-product. This enzymatic reaction provides an intracellular de novo source of dTMP, an essential precursor for DNA biosynthesis. The chain is Thymidylate synthase from Francisella tularensis subsp. novicida (strain U112).